A 78-amino-acid polypeptide reads, in one-letter code: Putative gastrointestinal growth factor xP1 (78 aa).

The signal sequence occupies residues 1 to 23 (MNYKVFCLVAIALIVGSIGSANG). One can recognise a P-type domain in the interval 30-73 (EQCSVERLARVNCGYSGITPQECTKQGCCFDSTIQDAPWCFYPR). Intrachain disulfides connect C32–C58, C42–C57, and C52–C69.

As to expression, stomach mucosa.

It localises to the secreted. Its function is as follows. May act as a growth factor. The polypeptide is Putative gastrointestinal growth factor xP1 (p1) (Xenopus laevis (African clawed frog)).